A 550-amino-acid polypeptide reads, in one-letter code: Keratin, type II cytoskeletal 74 (550 aa).

A head region spans residues 1–140 (MSRQLNIKSG…DPEIQKVRAQ (140 aa)). Residues 141-176 (EREQIMALNNKFASFIDKVRFLEQQNQVLGTKWELL) form a coil 1A region. An IF rod domain is found at 141–468 (EREQIMALNN…KLLEGEECWM (328 aa)). Positions 177 to 195 (QQMDLNNCRKNLEPILEGY) are linker 1. The tract at residues 196–287 (IGNLRKQLEM…CLYDAEVAQI (92 aa)) is coil 1B. The interval 288 to 311 (QTHTSETSVILSMDNNRYLDLDSI) is linker 12. The segment at 312-464 (IAEVRAQYED…ATYSKLLEGE (153 aa)) is coil 2. The tail stretch occupies residues 465 to 550 (ECWMSGENPS…VSSRARKAAR (86 aa)). Positions 491-550 (HPGSSASTDLGASTMASTGTSSSSSTQSGQTRAKGARVGDPKDSQDKSTPVSSRARKAAR) are disordered. A compositionally biased stretch (low complexity) spans 502 to 521 (ASTMASTGTSSSSSTQSGQT). A compositionally biased stretch (basic and acidic residues) spans 527 to 536 (RVGDPKDSQD).

It belongs to the intermediate filament family. In terms of assembly, heterotetramer of two type I and two type II keratins.

Has a role in hair formation. Specific component of keratin intermediate filaments in the inner root sheath (IRS) of the hair follicle. The chain is Keratin, type II cytoskeletal 74 (KRT74) from Bos taurus (Bovine).